The chain runs to 179 residues: uncharacterized protein (179 aa).

The segment at residues 1-27 is a signal peptide (or 24); that stretch reads MKTISKQLSAVIFPFIFSACVSQSASS.

This is an uncharacterized protein from Haemophilus influenzae (strain ATCC 51907 / DSM 11121 / KW20 / Rd).